The following is a 1885-amino-acid chain: Chitin synthase 5 (1885 aa).

The Myosin motor domain maps to 1 to 789 (MATRGNVPAH…SIALTGSQAA (789 aa)). Residue 99 to 106 (GESGSGKT) participates in ATP binding. N-linked (GlcNAc...) asparagine glycans are attached at residues Asn219 and Asn429. The interval 601-649 (KPLRMPSVSRKKHDQLRRMASRRADRSPAPQEEEPLPGTEEAKVRRTKP) is disordered. A compositionally biased stretch (basic residues) spans 609–621 (SRKKHDQLRRMAS). Residues 666-690 (LDNITKSLTAPNVNNYFVFCLKPND) are actin-binding. Residue Asn668 is glycosylated (N-linked (GlcNAc...) asparagine). The disordered stretch occupies residues 794-817 (GDIGSPSRPDTPGHNPFSDSKARL). A run of 2 helical transmembrane segments spans residues 894–914 (WLAI…KWIG) and 929–949 (FAIN…IIVF). Residues 957–1016 (QNVYSAAELSAHDGKGKHSAYVAIRGQVFDLGAFMPNHYPKIIPQSSLKKYAGVDATGLF) enclose the Cytochrome b5 heme-binding domain. N-linked (GlcNAc...) asparagine glycosylation is found at Asn1043 and Asn1068. A helical membrane pass occupies residues 1205–1225 (ILLAVSILLCSVIGFKFFAAL). N-linked (GlcNAc...) asparagine glycosylation is found at Asn1462 and Asn1568. The next 3 helical transmembrane spans lie at 1599–1619 (LLST…IVLL), 1626–1646 (VPLT…IIFI), and 1653–1673 (MIGW…GLPL). N-linked (GlcNAc...) asparagine glycans are attached at residues Asn1759 and Asn1790. Positions 1827–1882 (LPTDDMLLNEIRDILRTADLMTVTKKGIKQELERRFNVNLDMKRAYIGSATEAILS) constitute a DEK-C domain.

The protein in the N-terminal section; belongs to the TRAFAC class myosin-kinesin ATPase superfamily. Myosin family. In the C-terminal section; belongs to the chitin synthase family. Class V subfamily. In terms of processing, maximal activity requires trypsin activation, suggesting a zymogenic nature.

The protein resides in the cell membrane. The protein localises to the membrane. The catalysed reaction is [(1-&gt;4)-N-acetyl-beta-D-glucosaminyl](n) + UDP-N-acetyl-alpha-D-glucosamine = [(1-&gt;4)-N-acetyl-beta-D-glucosaminyl](n+1) + UDP + H(+). Its function is as follows. Polymerizes chitin, a structural polymer of the cell wall and septum, by transferring the sugar moiety of UDP-GlcNAc to the non-reducing end of the growing chitin polymer. CHS5 is required for the sustained growth at 37 degrees Celsius and is of critical importance for virulence. Especially important at infection temperatures for maintaining the cell wall integrity of developing yeast buds, elongating tips of hyphae, and random sites of expansion in sclerotic forms. This chain is Chitin synthase 5, found in Exophiala dermatitidis (Black yeast-like fungus).